Consider the following 210-residue polypeptide: UPF0301 protein CPS_1252 (210 aa).

Belongs to the UPF0301 (AlgH) family.

This Colwellia psychrerythraea (strain 34H / ATCC BAA-681) (Vibrio psychroerythus) protein is UPF0301 protein CPS_1252.